The following is a 158-amino-acid chain: NADH-quinone oxidoreductase subunit B (158 aa).

Positions 37, 38, 102, and 132 each coordinate [4Fe-4S] cluster.

This sequence belongs to the complex I 20 kDa subunit family. In terms of assembly, NDH-1 is composed of 14 different subunits. Subunits NuoB, C, D, E, F, and G constitute the peripheral sector of the complex. [4Fe-4S] cluster is required as a cofactor.

The protein resides in the cell inner membrane. The enzyme catalyses a quinone + NADH + 5 H(+)(in) = a quinol + NAD(+) + 4 H(+)(out). Its function is as follows. NDH-1 shuttles electrons from NADH, via FMN and iron-sulfur (Fe-S) centers, to quinones in the respiratory chain. Couples the redox reaction to proton translocation (for every two electrons transferred, four hydrogen ions are translocated across the cytoplasmic membrane), and thus conserves the redox energy in a proton gradient. This chain is NADH-quinone oxidoreductase subunit B, found in Bordetella petrii (strain ATCC BAA-461 / DSM 12804 / CCUG 43448).